The sequence spans 373 residues: 3 beta-hydroxysteroid dehydrogenase/Delta 5--&gt;4-isomerase type 1 (373 aa).

Residues 10-15 (GAGGFL), Tyr-155, and Lys-159 contribute to the NADP(+) site. The active-site Proton donor is Lys-159. The helical transmembrane segment at 288-308 (VALLYWLGFLLELVSFLLRPV) threads the bilayer.

Belongs to the 3-beta-HSD family. High levels in adrenal gland, kidney and male liver. Low levels in female liver.

The protein resides in the endoplasmic reticulum membrane. Its subcellular location is the mitochondrion membrane. The catalysed reaction is a 3beta-hydroxy-Delta(5)-steroid + NAD(+) = a 3-oxo-Delta(5)-steroid + NADH + H(+). It catalyses the reaction pregnenolone + NAD(+) = pregn-5-ene-3,20-dione + NADH + H(+). The enzyme catalyses 3beta-hydroxyandrost-5-en-17-one + NAD(+) = androst-5-ene-3,17-dione + NADH + H(+). It carries out the reaction androst-5-en-3beta,17beta-diol + NAD(+) = 17beta-hydroxy-androst-5-en-3-one + NADH + H(+). The catalysed reaction is a 3beta-hydroxysteroid + NADP(+) = a 3-oxosteroid + NADPH + H(+). It catalyses the reaction 5alpha-androstane-3beta,17beta-diol + NADP(+) = 17beta-hydroxy-5alpha-androstan-3-one + NADPH + H(+). The enzyme catalyses 3beta-hydroxy-5alpha-androstan-17-one + NADP(+) = 5alpha-androstan-3,17-dione + NADPH + H(+). It carries out the reaction a 3-oxo-Delta(5)-steroid = a 3-oxo-Delta(4)-steroid. The catalysed reaction is pregn-5-ene-3,20-dione = progesterone. It catalyses the reaction androst-5-ene-3,17-dione = androst-4-ene-3,17-dione. The enzyme catalyses 17beta-hydroxy-androst-5-en-3-one = testosterone. It carries out the reaction 5alpha-androstane-3beta,17beta-diol + NAD(+) = 17beta-hydroxy-5alpha-androstan-3-one + NADH + H(+). Its pathway is steroid hormone biosynthesis. It participates in steroid metabolism. In terms of biological role, a bifunctional enzyme responsible for the oxidation and isomerization of 3beta-hydroxy-Delta(5)-steroid precursors to 3-oxo-Delta(4)-steroids, an essential step in steroid hormone biosynthesis. Specifically catalyzes the conversion of pregnenolone to progesterone, 17alpha-hydroxypregnenolone to 17alpha-hydroxyprogesterone, dehydroepiandrosterone (DHEA) to 4-androstenedione, and androstenediol to testosterone. Additionally, catalyzes the interconversion between 3beta-hydroxy and 3-oxo-5alpha-androstane steroids controlling the bioavalability of the active forms. Specifically converts dihydrotestosterone to its inactive form 5alpha-androstanediol, that does not bind androgen receptor/AR. Also converts androstanedione, a precursor of testosterone and estrone, to epiandrosterone. Expected to use NAD(+) as preferred electron donor for the 3-beta-hydroxy-steroid dehydrogenase activity and NADPH for the 3-ketosteroid reductase activity. This Mesocricetus auratus (Golden hamster) protein is 3 beta-hydroxysteroid dehydrogenase/Delta 5--&gt;4-isomerase type 1 (HSD3B1).